A 103-amino-acid chain; its full sequence is Histone H4.2 (103 aa).

The span at 1-14 (MTGRGKGGKGLGKG) shows a compositional bias: gly residues. Positions 1–20 (MTGRGKGGKGLGKGGAKRHR) are disordered. Lys-6 carries the post-translational modification N6-acetyl-N6-methyllysine; alternate. N6-methyllysine; alternate occurs at positions 6, 9, and 13. Lys-13 carries the post-translational modification N6-acetyl-N6-methyllysine; alternate. Residues 17–21 (KRHRK) mediate DNA binding. Lys-92 carries the N6-glutaryllysine modification.

It belongs to the histone H4 family. The nucleosome is a histone octamer containing two molecules each of H2A, H2B, H3 and H4 assembled in one H3-H4 heterotetramer and two H2A-H2B heterodimers. The octamer wraps approximately 147 bp of DNA. Post-translationally, glutarylation at Lys-92 (H4K91glu) destabilizes nucleosomes by promoting dissociation of the H2A-H2B dimers from nucleosomes.

Its subcellular location is the nucleus. It is found in the chromosome. Functionally, core component of nucleosome. Nucleosomes wrap and compact DNA into chromatin, limiting DNA accessibility to the cellular machineries which require DNA as a template. Histones thereby play a central role in transcription regulation, DNA repair, DNA replication and chromosomal stability. DNA accessibility is regulated via a complex set of post-translational modifications of histones, also called histone code, and nucleosome remodeling. The chain is Histone H4.2 (H4.2) from Talaromyces funiculosus (Fruitlet core rot fungus).